A 355-amino-acid chain; its full sequence is Proto-oncogene Wnt-3 (355 aa).

The N-terminal stretch at 1–21 is a signal peptide; that stretch reads MEPHLLGLLLGLLLGGTRVLA. Disulfide bonds link C80–C91, C131–C139, C141–C158, C206–C220, C208–C215, C284–C315, C300–C310, C314–C354, C330–C345, C332–C342, and C337–C338. An N-linked (GlcNAc...) asparagine glycan is attached at N90. The O-palmitoleoyl serine; by PORCN moiety is linked to residue S212. A glycan (N-linked (GlcNAc...) asparagine) is linked at N301.

The protein belongs to the Wnt family. In terms of assembly, forms a soluble 1:1 complex with AFM; this prevents oligomerization and is required for prolonged biological activity. The complex with AFM may represent the physiological form in body fluids. Interacts with PORCN. Interacts with WLS. Palmitoleoylation is required for efficient binding to frizzled receptors. Depalmitoleoylation leads to Wnt signaling pathway inhibition.

The protein resides in the secreted. It localises to the extracellular space. The protein localises to the extracellular matrix. Its function is as follows. Ligand for members of the frizzled family of seven transmembrane receptors. Functions in the canonical Wnt signaling pathway that results in activation of transcription factors of the TCF/LEF family. Required for normal gastrulation, formation of the primitive streak, and for the formation of the mesoderm during early embryogenesis. Required for normal formation of the apical ectodermal ridge. Required for normal embryonic development, and especially for limb development. The sequence is that of Proto-oncogene Wnt-3 (WNT3) from Homo sapiens (Human).